A 257-amino-acid polypeptide reads, in one-letter code: 1-(5-phosphoribosyl)-5-[(5-phosphoribosylamino)methylideneamino] imidazole-4-carboxamide isomerase (257 aa).

Asp-8 serves as the catalytic Proton acceptor. The active-site Proton donor is the Asp-129.

Belongs to the HisA/HisF family.

The protein localises to the cytoplasm. The enzyme catalyses 1-(5-phospho-beta-D-ribosyl)-5-[(5-phospho-beta-D-ribosylamino)methylideneamino]imidazole-4-carboxamide = 5-[(5-phospho-1-deoxy-D-ribulos-1-ylimino)methylamino]-1-(5-phospho-beta-D-ribosyl)imidazole-4-carboxamide. Its pathway is amino-acid biosynthesis; L-histidine biosynthesis; L-histidine from 5-phospho-alpha-D-ribose 1-diphosphate: step 4/9. This Nostoc punctiforme (strain ATCC 29133 / PCC 73102) protein is 1-(5-phosphoribosyl)-5-[(5-phosphoribosylamino)methylideneamino] imidazole-4-carboxamide isomerase.